The chain runs to 83 residues: Kunitz-type serine protease inhibitor PILP-2 (83 aa).

An N-terminal signal peptide occupies residues 1–24 (MSSGGLLLLLGLLTLWMELTPVSS). A BPTI/Kunitz inhibitor domain is found at 31–81 (CNLLPEPGRCNAIVRAFYYNSRPRKCLEFPYGGCGGNANNFKTIEECQRTC). 3 disulfide bridges follow: Cys31/Cys81, Cys40/Cys64, and Cys56/Cys77.

Belongs to the venom Kunitz-type family. In terms of tissue distribution, expressed by the venom gland.

The protein localises to the secreted. Functionally, shows weak binding and inhibition of MMP-2 and shows an activity in inhibiting migration and invasion of neuroblastoma. The chain is Kunitz-type serine protease inhibitor PILP-2 from Bungarus multicinctus (Many-banded krait).